We begin with the raw amino-acid sequence, 185 residues long: Peptidyl-tRNA hydrolase (185 aa).

Residue tyrosine 14 coordinates tRNA. Residue histidine 19 is the Proton acceptor of the active site. TRNA contacts are provided by phenylalanine 64, asparagine 66, and asparagine 112.

The protein belongs to the PTH family. In terms of assembly, monomer.

It is found in the cytoplasm. It carries out the reaction an N-acyl-L-alpha-aminoacyl-tRNA + H2O = an N-acyl-L-amino acid + a tRNA + H(+). Functionally, hydrolyzes ribosome-free peptidyl-tRNAs (with 1 or more amino acids incorporated), which drop off the ribosome during protein synthesis, or as a result of ribosome stalling. Catalyzes the release of premature peptidyl moieties from peptidyl-tRNA molecules trapped in stalled 50S ribosomal subunits, and thus maintains levels of free tRNAs and 50S ribosomes. This chain is Peptidyl-tRNA hydrolase, found in Latilactobacillus sakei subsp. sakei (strain 23K) (Lactobacillus sakei subsp. sakei).